An 84-amino-acid chain; its full sequence is Dolichol phosphate-mannose biosynthesis regulatory protein (84 aa).

Transmembrane regions (helical) follow at residues 11-31 and 49-69; these read LGLV…VILL and YAIA…GIFI.

The protein belongs to the DPM2 family. In terms of assembly, component of the dolichol-phosphate mannose (DPM) synthase complex composed of DPM1, DPM2 and DPM3; in the complex interacts directly with DPM3. Component of the glycosylphosphatidylinositol-N-acetylglucosaminyltransferase (GPI-GnT) complex composed at least by PIGA, PIGC, PIGH, PIGP, PIGQ, PIGY and DPM2. Interacts with PIGA, PIGC and PIGQ.

The protein localises to the endoplasmic reticulum membrane. It participates in protein modification; protein glycosylation. Regulates the biosynthesis of dolichol phosphate-mannose. Regulatory subunit of the dolichol-phosphate mannose (DPM) synthase complex; essential for the ER localization and stable expression of DPM1. Part of the glycosylphosphatidylinositol-N-acetylglucosaminyltransferase (GPI-GnT) complex that catalyzes the transfer of N-acetylglucosamine from UDP-N-acetylglucosamine to phosphatidylinositol and participates in the first step of GPI biosynthesis. May act by regulating the GPI-GNT complex. This is Dolichol phosphate-mannose biosynthesis regulatory protein from Bos taurus (Bovine).